The primary structure comprises 290 residues: ATP synthase gamma chain (290 aa).

Belongs to the ATPase gamma chain family. In terms of assembly, F-type ATPases have 2 components, CF(1) - the catalytic core - and CF(0) - the membrane proton channel. CF(1) has five subunits: alpha(3), beta(3), gamma(1), delta(1), epsilon(1). CF(0) has three main subunits: a, b and c.

The protein resides in the cell inner membrane. Functionally, produces ATP from ADP in the presence of a proton gradient across the membrane. The gamma chain is believed to be important in regulating ATPase activity and the flow of protons through the CF(0) complex. This chain is ATP synthase gamma chain, found in Erythrobacter litoralis (strain HTCC2594).